A 32-amino-acid polypeptide reads, in one-letter code: Ranatuerin-2Lb (32 aa).

Cys-27 and Cys-32 form a disulfide bridge.

As to expression, expressed by the skin glands.

The protein resides in the secreted. Its function is as follows. Antibacterial activity against Gram-positive bacterium S.aureus and Gram-negative bacterium E.coli. Has activity against C.albicans. The protein is Ranatuerin-2Lb of Rana luteiventris (Columbia spotted frog).